Here is a 155-residue protein sequence, read N- to C-terminus: Cytochrome c-type biogenesis protein CcmE (155 aa).

Residues 1-8 (MNPLRKKR) lie on the Cytoplasmic side of the membrane. The helical; Signal-anchor for type II membrane protein transmembrane segment at 9–29 (LLIIAALLAGVGLAMTLALGA) threads the bilayer. Topologically, residues 30-155 (LKENINLFYT…GGSSTPAKQG (126 aa)) are periplasmic. Heme contacts are provided by His-124 and Tyr-128. A disordered region spans residues 134–155 (TKALRDSGQAAPGGSSTPAKQG).

It belongs to the CcmE/CycJ family.

The protein localises to the cell inner membrane. In terms of biological role, heme chaperone required for the biogenesis of c-type cytochromes. Transiently binds heme delivered by CcmC and transfers the heme to apo-cytochromes in a process facilitated by CcmF and CcmH. The polypeptide is Cytochrome c-type biogenesis protein CcmE (Pseudomonas savastanoi pv. phaseolicola (strain 1448A / Race 6) (Pseudomonas syringae pv. phaseolicola (strain 1448A / Race 6))).